The following is a 316-amino-acid chain: Ribosomal RNA small subunit methyltransferase H (316 aa).

Residues 42 to 44 (GGH), D62, F86, D104, and Q111 contribute to the S-adenosyl-L-methionine site.

It belongs to the methyltransferase superfamily. RsmH family.

The protein localises to the cytoplasm. The enzyme catalyses cytidine(1402) in 16S rRNA + S-adenosyl-L-methionine = N(4)-methylcytidine(1402) in 16S rRNA + S-adenosyl-L-homocysteine + H(+). In terms of biological role, specifically methylates the N4 position of cytidine in position 1402 (C1402) of 16S rRNA. The protein is Ribosomal RNA small subunit methyltransferase H of Polynucleobacter asymbioticus (strain DSM 18221 / CIP 109841 / QLW-P1DMWA-1) (Polynucleobacter necessarius subsp. asymbioticus).